A 248-amino-acid polypeptide reads, in one-letter code: Probable phosphatase VPA0505 (248 aa).

Residues His8, His10, His16, His41, Glu74, His102, His132, Asp194, and His196 each coordinate Zn(2+).

Belongs to the PHP family. The cofactor is Zn(2+).

This is Probable phosphatase VPA0505 from Vibrio parahaemolyticus serotype O3:K6 (strain RIMD 2210633).